Reading from the N-terminus, the 364-residue chain is MQIRRLALHQLRRFNAVELSPQPGLNLLTGDNGAGKTSILEALHLMAYGRSFRGRVRDGLVRQGQEALEIFVEWDEQRASHPPHRRKAGLRHSGQDWKGRLDGEDVAQLGNLCAALAVVTFEPGSHALVSGGGEPRRRFLDWGLFHVEPDFLSLWRRYSRALKQRNALLKQGGPSRMLDTWDHELAEAGEPLTSRRQHYLERLQQRTVALAAELAPQLGIQAMELSPGWRRHELPLADALLLARERDRQAGYTSVGPHRADWSVDFHNIPGRDALSRGQAKLTALACLLAQAEDYAEQRGEWPVIALDDLASELDRTHQARVLERLLGGPAQIFVTATETPAALQELTHIARFHVEHAQIVAVP.

Residue 30-37 (GDNGAGKT) coordinates ATP.

This sequence belongs to the RecF family.

It localises to the cytoplasm. Its function is as follows. The RecF protein is involved in DNA metabolism; it is required for DNA replication and normal SOS inducibility. RecF binds preferentially to single-stranded, linear DNA. It also seems to bind ATP. The sequence is that of DNA replication and repair protein RecF from Stenotrophomonas maltophilia (strain R551-3).